The chain runs to 302 residues: N-acetylmuramic acid 6-phosphate etherase (302 aa).

The region spanning 58–221 (IGESFLNGGR…STGAMVKTGK (164 aa)) is the SIS domain. The active-site Proton donor is E86. E117 is a catalytic residue.

This sequence belongs to the GCKR-like family. MurNAc-6-P etherase subfamily. In terms of assembly, homodimer.

It carries out the reaction N-acetyl-D-muramate 6-phosphate + H2O = N-acetyl-D-glucosamine 6-phosphate + (R)-lactate. It functions in the pathway amino-sugar metabolism; N-acetylmuramate degradation. Specifically catalyzes the cleavage of the D-lactyl ether substituent of MurNAc 6-phosphate, producing GlcNAc 6-phosphate and D-lactate. This Clostridium botulinum (strain Okra / Type B1) protein is N-acetylmuramic acid 6-phosphate etherase.